Here is a 389-residue protein sequence, read N- to C-terminus: MPLENLEEEGLPKNPDLRIAQLRFLLSLPEHRGDAAVRDELMAAVRDNNMAPYYEALCKSLDWQIDVDLLNKMKKANEDELKRLDEELEDAEKNLGESEIRDAMMAKAEYLCRIGDKEGALTAFRKTYDKTVALGHRLDIVFYLLRIGLFYMDNDLITRNTEKAKSLIEEGGDWDRRNRLKVYQGLYCVAIRDFKQAAELFLDTVSTFTSYELMDYKTFVTYTVYVSMIALERPDLREKVIKGAEILEVLHSLPAVRQYLFSLYECRYSVFFQSLAVVEQEMKKDWLFAPHYRYYVREMRIHAYSQLLESYRSLTLGYMAEAFGVGVEFIDQELSRFIAAGRLHCKIDKVNEIVETNRPDSKNWQYQETIKKGDLLLNRVQKLSRVINM.

The PCI domain maps to 193–361 (DFKQAAELFL…EIVETNRPDS (169 aa)).

Belongs to the proteasome subunit S10 family. In terms of assembly, component of the 19S proteasome regulatory particle complex. The 26S proteasome consists of a 20S core particle (CP) and two 19S regulatory subunits (RP). The regulatory particle is made of a lid composed of 9 subunits including PSMD6, a base containing 6 ATPases and few additional components.

In terms of biological role, component of the 26S proteasome, a multiprotein complex involved in the ATP-dependent degradation of ubiquitinated proteins. This complex plays a key role in the maintenance of protein homeostasis by removing misfolded or damaged proteins, which could impair cellular functions, and by removing proteins whose functions are no longer required. Therefore, the proteasome participates in numerous cellular processes, including cell cycle progression, apoptosis, or DNA damage repair. The chain is 26S proteasome non-ATPase regulatory subunit 6 (PSMD6) from Homo sapiens (Human).